A 331-amino-acid chain; its full sequence is tRNA-modifying protein YgfZ (331 aa).

Folate contacts are provided by W28 and W191.

Belongs to the tRNA-modifying YgfZ family.

The protein localises to the cytoplasm. In terms of biological role, folate-binding protein involved in regulating the level of ATP-DnaA and in the modification of some tRNAs. It is probably a key factor in regulatory networks that act via tRNA modification, such as initiation of chromosomal replication. The protein is tRNA-modifying protein YgfZ of Edwardsiella ictaluri (strain 93-146).